We begin with the raw amino-acid sequence, 380 residues long: tRNA(Met) cytidine acetate ligase (380 aa).

Residues 7–20 (IAEY…HLYQ), Gly-101, Asn-151, and Arg-176 each bind ATP.

It belongs to the TmcAL family.

Its subcellular location is the cytoplasm. It carries out the reaction cytidine(34) in elongator tRNA(Met) + acetate + ATP = N(4)-acetylcytidine(34) in elongator tRNA(Met) + AMP + diphosphate. Its function is as follows. Catalyzes the formation of N(4)-acetylcytidine (ac(4)C) at the wobble position of elongator tRNA(Met), using acetate and ATP as substrates. First activates an acetate ion to form acetyladenylate (Ac-AMP) and then transfers the acetyl group to tRNA to form ac(4)C34. In Ligilactobacillus salivarius (strain UCC118) (Lactobacillus salivarius), this protein is tRNA(Met) cytidine acetate ligase.